The following is a 362-amino-acid chain: Probable RNA methyltransferase Tbd_1951 (362 aa).

Glu-89 (proton acceptor) is an active-site residue. The region spanning 92–318 (LLPRDGVCVS…AKLRHSAGQD (227 aa)) is the Radical SAM core domain. Cys-99 and Cys-323 are oxidised to a cystine. [4Fe-4S] cluster-binding residues include Cys-106, Cys-110, and Cys-113. S-adenosyl-L-methionine contacts are provided by residues 151 to 152 (GE), Ser-181, 204 to 206 (SLH), and Asn-280. The active-site S-methylcysteine intermediate is Cys-323. The tract at residues 342 to 362 (LPSAETPAASPKAAASIGFPG) is disordered. The segment covering 343–362 (PSAETPAASPKAAASIGFPG) has biased composition (low complexity).

The protein belongs to the radical SAM superfamily. RlmN family. The cofactor is [4Fe-4S] cluster.

Its subcellular location is the cytoplasm. This chain is Probable RNA methyltransferase Tbd_1951, found in Thiobacillus denitrificans (strain ATCC 25259 / T1).